The sequence spans 302 residues: Large ribosomal subunit protein bL28m (302 aa).

This sequence belongs to the bacterial ribosomal protein bL28 family. In terms of assembly, component of the mitochondrial ribosome large subunit (39S) which comprises a 16S rRNA and about 50 distinct proteins.

It localises to the mitochondrion. The protein is Large ribosomal subunit protein bL28m (mRpL28) of Drosophila melanogaster (Fruit fly).